Here is a 42-residue protein sequence, read N- to C-terminus: Potassium channel toxin gamma-KTx 1.2 (42 aa).

Disulfide bonds link Cys5/Cys23, Cys11/Cys34, Cys20/Cys39, and Cys24/Cys41.

It belongs to the ergtoxin family. Gamma-KTx 1 subfamily. In terms of tissue distribution, expressed by the venom gland.

It localises to the secreted. Blocks Kv11/ERG potassium channels. This is Potassium channel toxin gamma-KTx 1.2 from Centruroides elegans (Bark scorpion).